Consider the following 188-residue polypeptide: Hypoxanthine/guanine phosphoribosyltransferase (188 aa).

Belongs to the purine/pyrimidine phosphoribosyltransferase family. Archaeal HPRT subfamily. Homodimer.

The protein resides in the cytoplasm. The enzyme catalyses IMP + diphosphate = hypoxanthine + 5-phospho-alpha-D-ribose 1-diphosphate. It catalyses the reaction GMP + diphosphate = guanine + 5-phospho-alpha-D-ribose 1-diphosphate. Its pathway is purine metabolism; IMP biosynthesis via salvage pathway; IMP from hypoxanthine: step 1/1. Functionally, catalyzes a salvage reaction resulting in the formation of IMP that is energically less costly than de novo synthesis. This chain is Hypoxanthine/guanine phosphoribosyltransferase, found in Methanobrevibacter ruminantium (strain ATCC 35063 / DSM 1093 / JCM 13430 / OCM 146 / M1) (Methanobacterium ruminantium).